The primary structure comprises 251 residues: Ell1-associated factor 1 (251 aa).

Disordered regions lie at residues 110–187 (SKTV…DMEV) and 201–251 (FDQE…EDED). A compositionally biased stretch (polar residues) spans 112–123 (TVPSNAITQSDN). Residues 124 to 135 (SQISESKSTSQS) show a composition bias toward low complexity. Residues 143–157 (RRKEKELEASKDGKI) show a composition bias toward basic and acidic residues. Composition is skewed to polar residues over residues 204-220 (EFNS…TASK) and 236-251 (SSAQ…EDED). A Phosphoserine modification is found at serine 247.

The protein belongs to the EAF family. In terms of assembly, forms a stable heterodimer with ell1. Ell1-eaf1 complex interacts with RNA polymerase II.

The protein resides in the nucleus. Functionally, activates transcription elongation by RNA polymerase II and pyrophosphorolysis as a complex with ell1. Acts as a transcriptional transactivator of ell1 elongation activities. In Schizosaccharomyces pombe (strain 972 / ATCC 24843) (Fission yeast), this protein is Ell1-associated factor 1 (eaf1).